The sequence spans 168 residues: uncharacterized protein (168 aa).

This is an uncharacterized protein from Mycoplasma pneumoniae (strain ATCC 29342 / M129 / Subtype 1) (Mycoplasmoides pneumoniae).